The sequence spans 224 residues: Heme response regulator HssR (224 aa).

Residues 3–116 (QCLVVDDDPR…ELIFRIRAVL (114 aa)) enclose the Response regulatory domain. At D52 the chain carries 4-aspartylphosphate. The segment at residues 124–222 (NSEMTIGNLT…VRGQGYKVEN (99 aa)) is a DNA-binding region (ompR/PhoB-type).

Post-translationally, phosphorylated by HssS.

It is found in the cytoplasm. Member of the two-component regulatory system HssS/HssR involved in intracellular heme homeostasis and tempering of staphylococcal virulence. Phosphorylated HssR binds to a direct repeat sequence within hrtAB promoter and activates the expression of hrtAB, an efflux pump, in response to extracellular heme, hemin, hemoglobin or blood. This is Heme response regulator HssR (hssR) from Staphylococcus aureus (strain COL).